A 392-amino-acid polypeptide reads, in one-letter code: Spermatogenesis associated 6-like protein (392 aa).

Phosphoserine is present on residues Ser-260 and Ser-263. Positions 286 to 301 (SCLDSSQFGKSSSSKQ) are enriched in low complexity. Positions 286-305 (SCLDSSQFGKSSSSKQGDAD) are disordered.

It belongs to the SPATA6 family.

The polypeptide is Spermatogenesis associated 6-like protein (SPATA6L) (Homo sapiens (Human)).